We begin with the raw amino-acid sequence, 295 residues long: Foldase protein PrsA (295 aa).

The first 19 residues, 1-19 (MKKVLIGFASIAMAFTLAA), serve as a signal peptide directing secretion. Residue C20 is the site of N-palmitoyl cysteine attachment. Residue C20 is the site of S-diacylglycerol cysteine attachment. The PpiC domain maps to 136–229 (EPKVTVAQIL…YGYQVIKMIN (94 aa)).

Belongs to the PrsA family.

Its subcellular location is the cell membrane. It carries out the reaction [protein]-peptidylproline (omega=180) = [protein]-peptidylproline (omega=0). Plays a major role in protein secretion by helping the post-translocational extracellular folding of several secreted proteins. This Pediococcus pentosaceus (strain ATCC 25745 / CCUG 21536 / LMG 10740 / 183-1w) protein is Foldase protein PrsA.